Here is a 309-residue protein sequence, read N- to C-terminus: MEMO1 family protein C4H3.04c (309 aa).

The protein belongs to the MEMO1 family.

This Schizosaccharomyces pombe (strain 972 / ATCC 24843) (Fission yeast) protein is MEMO1 family protein C4H3.04c.